Reading from the N-terminus, the 85-residue chain is Large ribosomal subunit protein bL27 (85 aa).

This sequence belongs to the bacterial ribosomal protein bL27 family.

The protein is Large ribosomal subunit protein bL27 of Persephonella marina (strain DSM 14350 / EX-H1).